The primary structure comprises 1240 residues: MFAPIGAPGMGERASQNFRSASGFRDLLVHAVKVLVLSAYQRRPCTSMLRPREQKRIKMRLKWMCLMKFCFMQNNYWDTQRRFTGGMHNVPELATFDAWLQHWRVVHWRLNIISEILIDFQALVRMMKNLAGQCHFDFYPVCTHCVQLVNNWYIAEFKPHLEEETEWWKDLVKPRMGNPVHEIEPNRKSQYVESRRIPPPLNGDEFANFLHVCQCAKLAFDVERAATEENFEDALDTLEEDFYDIDSTIPKRDLLAADARVVKRAFTLRRKRRPNRTSVYSMKGQPPVTFSASDLVSCLGQVLSTLPTVKMDREAIEDQQDHLEDKQGGEILTTPQFIEVLRKKKREVREKEFDDSTQGKLLPAEDFTLSKHDVFLANSVLDGLRKSKLIQRFAGKCATSTKITVDLTNKEEVVRYGPKELASEGFRQTFNVLNRPEYNALNKLAEAGWKEAKSVVLNLHIRSYLPQQMNAYAFCVIMWGHSSDAQEAALSGSYVYLGDGEATMLQLPLLCEYVGHNLQDFEAYKRSLVLSTVFPEFSGIADGKAMFGITSIEFTEYLPTSHAGITHERDSWDAMLRNHTEEKRRFLAGFNVVDTIEKGNRKGFSFPDFDLKAVPRHQAVVRTFEDQDVAPILSKAKSMRVKTFGSFRAGNIPVNFLGTPSNGQVASKHSVSENAGYSVGDMKSAENFVFTQLITVPAASTKGNVLAGVDILANARTTMSGFYMRWLQKGYIDTNLKLICHLPRAPFAGMSFFVLIDGTGYLAKDAPTSLNEEEILSYPLHLVTTSDVSSYEFVLDWHRYIGQVPFAEENAFLRPTLFLVACVSSTLALSAKVEFYLEAQSVGEELPRTLAPSPVLSYPFQNSFLEDLDLFLPPKRLTLGERETTIIPLSFAKSKKSGDAVLYSHAAARLAHFQGIGGVLHGVVYLVGSQLVASQSRISMWSKEQHIQHQAVNVHVDTDTGVAFDLPIKDAFYASSVYGDSGAVIQVTCLCSPMSPNAIKAPFDMIFKIRGFTPDAPMCRTINFTQRFGWFAVEPTTSTGAIKLKIWPVSNHLESEDMKVTGYTNAFLQMCQTSTMHFGSVIIHFSWTLFGGTTNAATAGGVVTIAEGFGPEEENFRGHCRNLSIYEGRATVPLELGTFAGPTPLKKLDFKYRNWIRFTTPKGRNISSIFCAIEVLPGFSFYGRTGSPRLSVVGTTVPPTADASTSNSQGGDEDIGDQYSAALGRGRGRGSRPGPSPIRG.

Over residues 1193-1210 (VGTTVPPTADASTSNSQG) the composition is skewed to polar residues. The tract at residues 1193 to 1240 (VGTTVPPTADASTSNSQGGDEDIGDQYSAALGRGRGRGSRPGPSPIRG) is disordered.

The protein belongs to the nepoviruses RNA2 polyprotein family. Specific enzymatic cleavages in vivo by the P1 encoded 3C-like protease yield mature proteins.

The protein localises to the host cell junction. Its subcellular location is the host plasmodesma. The protein resides in the virion. Implicated in RNA2 replication. Could also be required for nematode transmission of the virus. Its function is as follows. Transports viral genome to neighboring plant cells directly through plasmosdesmata, without any budding. The movement protein allows efficient cell to cell propagation, by bypassing the host cell wall barrier. Acts by forming a tubular structure at the host plasmodesmata, enlarging it enough to allow free passage of virion capsids. The polypeptide is RNA2 polyprotein (Cycas necrotic stunt virus (CNSV)).